The following is a 204-amino-acid chain: Peptide deformylase (204 aa).

2 residues coordinate Fe cation: C131 and H174. E175 is a catalytic residue. H178 is a Fe cation binding site.

Belongs to the polypeptide deformylase family. Fe(2+) serves as cofactor.

The catalysed reaction is N-terminal N-formyl-L-methionyl-[peptide] + H2O = N-terminal L-methionyl-[peptide] + formate. In terms of biological role, removes the formyl group from the N-terminal Met of newly synthesized proteins. Requires at least a dipeptide for an efficient rate of reaction. N-terminal L-methionine is a prerequisite for activity but the enzyme has broad specificity at other positions. The polypeptide is Peptide deformylase (Streptococcus equi subsp. zooepidemicus (strain MGCS10565)).